The chain runs to 227 residues: Cytochrome c oxidase subunit 2 (227 aa).

Residues 1 to 14 (MAYPMQLGFQDATS) are Mitochondrial intermembrane-facing. A helical membrane pass occupies residues 15–45 (PIMEELLHFHDHTLMIVFLISSLVLYIISLM). At 46–59 (LTTKLTHTSTMDAQ) the chain is on the mitochondrial matrix side. The helical transmembrane segment at 60–87 (EVETIWTILPAIILILIALPSLRILYMM) threads the bilayer. The Mitochondrial intermembrane segment spans residues 88 to 227 (DEINNPSLTV…YFEKWSASML (140 aa)). Residues His-161, Cys-196, Glu-198, Cys-200, His-204, and Met-207 each contribute to the Cu cation site. Glu-198 contributes to the Mg(2+) binding site. Tyr-218 carries the post-translational modification Phosphotyrosine.

It belongs to the cytochrome c oxidase subunit 2 family. Component of the cytochrome c oxidase (complex IV, CIV), a multisubunit enzyme composed of 14 subunits. The complex is composed of a catalytic core of 3 subunits MT-CO1, MT-CO2 and MT-CO3, encoded in the mitochondrial DNA, and 11 supernumerary subunits COX4I, COX5A, COX5B, COX6A, COX6B, COX6C, COX7A, COX7B, COX7C, COX8 and NDUFA4, which are encoded in the nuclear genome. The complex exists as a monomer or a dimer and forms supercomplexes (SCs) in the inner mitochondrial membrane with NADH-ubiquinone oxidoreductase (complex I, CI) and ubiquinol-cytochrome c oxidoreductase (cytochrome b-c1 complex, complex III, CIII), resulting in different assemblies (supercomplex SCI(1)III(2)IV(1) and megacomplex MCI(2)III(2)IV(2)). Found in a complex with TMEM177, COA6, COX18, COX20, SCO1 and SCO2. Interacts with TMEM177 in a COX20-dependent manner. Interacts with COX20. Interacts with COX16. Requires Cu cation as cofactor.

It is found in the mitochondrion inner membrane. The catalysed reaction is 4 Fe(II)-[cytochrome c] + O2 + 8 H(+)(in) = 4 Fe(III)-[cytochrome c] + 2 H2O + 4 H(+)(out). In terms of biological role, component of the cytochrome c oxidase, the last enzyme in the mitochondrial electron transport chain which drives oxidative phosphorylation. The respiratory chain contains 3 multisubunit complexes succinate dehydrogenase (complex II, CII), ubiquinol-cytochrome c oxidoreductase (cytochrome b-c1 complex, complex III, CIII) and cytochrome c oxidase (complex IV, CIV), that cooperate to transfer electrons derived from NADH and succinate to molecular oxygen, creating an electrochemical gradient over the inner membrane that drives transmembrane transport and the ATP synthase. Cytochrome c oxidase is the component of the respiratory chain that catalyzes the reduction of oxygen to water. Electrons originating from reduced cytochrome c in the intermembrane space (IMS) are transferred via the dinuclear copper A center (CU(A)) of subunit 2 and heme A of subunit 1 to the active site in subunit 1, a binuclear center (BNC) formed by heme A3 and copper B (CU(B)). The BNC reduces molecular oxygen to 2 water molecules using 4 electrons from cytochrome c in the IMS and 4 protons from the mitochondrial matrix. This chain is Cytochrome c oxidase subunit 2 (MT-CO2), found in Bison bonasus (European bison).